A 93-amino-acid chain; its full sequence is Co-chaperonin GroES (93 aa).

Belongs to the GroES chaperonin family. As to quaternary structure, heptamer of 7 subunits arranged in a ring. Interacts with the chaperonin GroEL.

Its subcellular location is the cytoplasm. Its function is as follows. Together with the chaperonin GroEL, plays an essential role in assisting protein folding. The GroEL-GroES system forms a nano-cage that allows encapsulation of the non-native substrate proteins and provides a physical environment optimized to promote and accelerate protein folding. GroES binds to the apical surface of the GroEL ring, thereby capping the opening of the GroEL channel. This chain is Co-chaperonin GroES, found in Streptococcus gordonii.